Reading from the N-terminus, the 630-residue chain is Chaperone protein HtpG (630 aa).

The tract at residues 1–336 (MTTTVEQTAE…TADLPLNVSR (336 aa)) is a; substrate-binding. The tract at residues 337–551 (EMIQESPILA…EDGYDRQMEK (215 aa)) is b. Residues 552-630 (ILQNAGRLQG…VFERSVRSEG (79 aa)) form a c region.

The protein belongs to the heat shock protein 90 family. As to quaternary structure, homodimer.

The protein resides in the cytoplasm. In terms of biological role, molecular chaperone. Has ATPase activity. This Rhizobium etli (strain ATCC 51251 / DSM 11541 / JCM 21823 / NBRC 15573 / CFN 42) protein is Chaperone protein HtpG.